Consider the following 461-residue polypeptide: Argininosuccinate lyase (461 aa).

The protein belongs to the lyase 1 family. Argininosuccinate lyase subfamily.

It localises to the cytoplasm. The enzyme catalyses 2-(N(omega)-L-arginino)succinate = fumarate + L-arginine. It participates in amino-acid biosynthesis; L-arginine biosynthesis; L-arginine from L-ornithine and carbamoyl phosphate: step 3/3. Its activity is regulated as follows. Strongly inhibited by L-arginine. Inhibitory effects are lowered at pH 7.0 compared to those at pH 8.0. At 42 degrees Celsius and pH 8.0, activity decreases to 77% and 25% in the presence of 1 mM and 10 mM arginine, respectively. The other amino and organic acids do not affect activity. Functionally, catalyzes the last step of arginine biosynthesis, the conversion of argininosuccinate into L-arginine and fumarate. The protein is Argininosuccinate lyase of Nostoc sp. (strain PCC 7120 / SAG 25.82 / UTEX 2576).